The primary structure comprises 626 residues: Interferon-induced GTP-binding protein MxC (626 aa).

Residues 40–313 (DLNLPAIAVI…LVEHIAKNVP (274 aa)) enclose the Dynamin-type G domain. Residues 50-57 (GDQSSGKS) are G1 motif. Residue 50 to 57 (GDQSSGKS) coordinates GTP. The tract at residues 75-77 (VTR) is G2 motif. The G3 motif stretch occupies residues 151-154 (DLPG). GTP-binding positions include 151 to 155 (DLPGI) and 220 to 223 (TKPD). The interval 220 to 223 (TKPD) is G4 motif. The G5 motif stretch occupies residues 252–255 (KCRG). The GED domain maps to 534–624 (LRETAFHLTS…ALPKVVHSAN (91 aa)).

The protein belongs to the TRAFAC class dynamin-like GTPase superfamily. Dynamin/Fzo/YdjA family.

The protein resides in the cytoplasm. This is Interferon-induced GTP-binding protein MxC (mxc) from Danio rerio (Zebrafish).